The chain runs to 236 residues: Transmembrane protein 70 homolog, mitochondrial (236 aa).

The transit peptide at 1-64 directs the protein to the mitochondrion; the sequence is MLGLRAMLPK…WLSVKSTKTE (64 aa). The next 2 helical transmembrane spans lie at 83–103 and 116–136; these read MVKF…PILL and VFLC…LHFI.

This sequence belongs to the TMEM70 family. As to quaternary structure, associates with mitochondrial complex I assembly intermediates during its biogenesis.

It is found in the mitochondrion membrane. Scaffold protein that participates in the c-ring assembly of mitochondrial ATP synthase (F(1)F(0) ATP synthase or complex V). Also binds the mitochondrial proton-transporting ATP synthase complex I and may play a role in the stability of its membrane-bound subassemblies. The protein is Transmembrane protein 70 homolog, mitochondrial of Drosophila melanogaster (Fruit fly).